Here is a 575-residue protein sequence, read N- to C-terminus: Isocitrate dehydrogenase kinase/phosphatase (575 aa).

Residues 316 to 322 (ARGDKGL) and Lys-337 contribute to the ATP site. Residue Asp-372 is part of the active site.

The protein belongs to the AceK family.

The protein resides in the cytoplasm. The catalysed reaction is L-seryl-[isocitrate dehydrogenase] + ATP = O-phospho-L-seryl-[isocitrate dehydrogenase] + ADP + H(+). In terms of biological role, bifunctional enzyme which can phosphorylate or dephosphorylate isocitrate dehydrogenase (IDH) on a specific serine residue. This is a regulatory mechanism which enables bacteria to bypass the Krebs cycle via the glyoxylate shunt in response to the source of carbon. When bacteria are grown on glucose, IDH is fully active and unphosphorylated, but when grown on acetate or ethanol, the activity of IDH declines drastically concomitant with its phosphorylation. In Anaeromyxobacter sp. (strain Fw109-5), this protein is Isocitrate dehydrogenase kinase/phosphatase.